The sequence spans 497 residues: Squalene monooxygenase (497 aa).

Residues 29–30 (VV), 49–50 (ER), R57, R159, V175, D336, and M349 each bind FAD. Transmembrane regions (helical) follow at residues 434–454 (FLSG…TVAL) and 467–487 (LGFL…AKVF).

This sequence belongs to the squalene monooxygenase family. It depends on FAD as a cofactor.

Its subcellular location is the microsome membrane. It is found in the endoplasmic reticulum membrane. It catalyses the reaction squalene + reduced [NADPH--hemoprotein reductase] + O2 = (S)-2,3-epoxysqualene + oxidized [NADPH--hemoprotein reductase] + H2O + H(+). The protein operates within terpene metabolism; lanosterol biosynthesis; lanosterol from farnesyl diphosphate: step 2/3. Catalyzes the stereospecific oxidation of squalene to (S)-2,3-epoxysqualene, and is considered to be a rate-limiting enzyme in steroid biosynthesis. This is Squalene monooxygenase (ERG1) from Eremothecium gossypii (strain ATCC 10895 / CBS 109.51 / FGSC 9923 / NRRL Y-1056) (Yeast).